We begin with the raw amino-acid sequence, 185 residues long: ATP synthase subunit b, chloroplastic (185 aa).

The chain crosses the membrane as a helical span at residues 31–53 (IINITVVLGILIYFGKGVLSNLL).

Belongs to the ATPase B chain family. In terms of assembly, F-type ATPases have 2 components, F(1) - the catalytic core - and F(0) - the membrane proton channel. F(1) has five subunits: alpha(3), beta(3), gamma(1), delta(1), epsilon(1). F(0) has four main subunits: a(1), b(1), b'(1) and c(10-14). The alpha and beta chains form an alternating ring which encloses part of the gamma chain. F(1) is attached to F(0) by a central stalk formed by the gamma and epsilon chains, while a peripheral stalk is formed by the delta, b and b' chains.

It is found in the plastid. The protein localises to the chloroplast thylakoid membrane. Functionally, f(1)F(0) ATP synthase produces ATP from ADP in the presence of a proton or sodium gradient. F-type ATPases consist of two structural domains, F(1) containing the extramembraneous catalytic core and F(0) containing the membrane proton channel, linked together by a central stalk and a peripheral stalk. During catalysis, ATP synthesis in the catalytic domain of F(1) is coupled via a rotary mechanism of the central stalk subunits to proton translocation. Its function is as follows. Component of the F(0) channel, it forms part of the peripheral stalk, linking F(1) to F(0). This is ATP synthase subunit b, chloroplastic from Gnetum parvifolium (Small-leaved jointfir).